A 152-amino-acid chain; its full sequence is MRCPFCGNGDTQVKDSRPTEDSAAIRRRRFCPACNSRFTTFERVQLRDLVIVKKDGQRSAFDRDKLARSIRIACRKRPVDEDSIERIVNGIQRRLESSGDTEINSKAVGELVMEGLRGLDPVAYVRFASVYRNFREAKDFEDFVETLGGSAD.

The tract at residues 1–21 is disordered; the sequence is MRCPFCGNGDTQVKDSRPTED. Residues 3-34 fold into a zinc finger; sequence CPFCGNGDTQVKDSRPTEDSAAIRRRRFCPAC. The span at 12-21 shows a compositional bias: basic and acidic residues; sequence QVKDSRPTED. Residues 49-139 form the ATP-cone domain; sequence LVIVKKDGQR…VYRNFREAKD (91 aa).

This sequence belongs to the NrdR family. The cofactor is Zn(2+).

Negatively regulates transcription of bacterial ribonucleotide reductase nrd genes and operons by binding to NrdR-boxes. The chain is Transcriptional repressor NrdR from Rhodospirillum rubrum (strain ATCC 11170 / ATH 1.1.1 / DSM 467 / LMG 4362 / NCIMB 8255 / S1).